Reading from the N-terminus, the 323-residue chain is Sphingolipid delta(4)-desaturase/C4-monooxygenase DES2 (323 aa).

A lipid anchor (N-myristoyl glycine) is attached at G2. Transmembrane regions (helical) follow at residues 45–65 and 68–88; these read WAVL…RGLA and WLLF…TLAI. Residues 89–93 carry the Histidine box-1 motif; that stretch reads HDISH. The required for C4-hydroxylase activity stretch occupies residues 95–99; sequence AAFGT. The Histidine box-2 motif lies at 128 to 132; it reads HVDHH. The helical transmembrane segment at 210–231 threads the bilayer; it reads VYLLASSFLGLGLHPISGHFVA. A Histidine box-3 motif is present at residues 259 to 263; it reads HVEHH.

It belongs to the fatty acid desaturase type 1 family. DEGS subfamily. As to expression, highly expressed in skin, intestine and kidney.

The protein resides in the endoplasmic reticulum membrane. The enzyme catalyses a dihydroceramide + 2 Fe(II)-[cytochrome b5] + O2 + 2 H(+) = a phytoceramide + 2 Fe(III)-[cytochrome b5] + H2O. It catalyses the reaction an N-acylsphinganine + 2 Fe(II)-[cytochrome b5] + O2 + 2 H(+) = an N-acylsphing-4-enine + 2 Fe(III)-[cytochrome b5] + 2 H2O. The catalysed reaction is N-octanoylsphinganine + 2 Fe(II)-[cytochrome b5] + O2 + 2 H(+) = N-octanoyl-4-hydroxysphinganine + 2 Fe(III)-[cytochrome b5] + H2O. It carries out the reaction an N-acylsphinganine + 2 Fe(II)-[cytochrome b5] + O2 + 2 H(+) = an N-acyl-(4R)-4-hydroxysphinganine + 2 Fe(III)-[cytochrome b5] + H2O. Its pathway is membrane lipid metabolism; sphingolipid biosynthesis. Functionally, bifunctional enzyme which acts both as a sphingolipid delta(4)-desaturase and a sphingolipid C4-monooxygenase. The sequence is that of Sphingolipid delta(4)-desaturase/C4-monooxygenase DES2 from Homo sapiens (Human).